The chain runs to 480 residues: tRNA (uracil-5-)-methyltransferase homolog B (480 aa).

Residues Gln299, Glu349, and Asn399 each coordinate S-adenosyl-L-methionine. Cys427 (nucleophile) is an active-site residue. Catalysis depends on Glu473, which acts as the Proton acceptor.

Belongs to the class I-like SAM-binding methyltransferase superfamily. RNA M5U methyltransferase family.

The protein resides in the mitochondrion. The catalysed reaction is uridine(54) in tRNA + S-adenosyl-L-methionine = 5-methyluridine(54) in tRNA + S-adenosyl-L-homocysteine + H(+). It carries out the reaction a uridine in 12S rRNA + S-adenosyl-L-methionine = a 5-methyluridine in 12S rRNA + S-adenosyl-L-homocysteine + H(+). Mitochondrial S-adenosyl-L-methionine-dependent methyltransferase that catalyzes the formation of 5-methyl-uridine in tRNAs and 12S rRNA. Catalyzes the methylation of uridine at position 54 (m5U54) in all tRNAs. Specifically methylates the uridine in position 429 of 12S rRNA (m5U429). Does not affect RNA stability or mitochondrial translation. The chain is tRNA (uracil-5-)-methyltransferase homolog B (trmt2b) from Danio rerio (Zebrafish).